The following is a 297-amino-acid chain: Glycerol-3-phosphate dehydrogenase [NAD(P)+] (297 aa).

The NADPH site is built by W11, R33, and K79. Residues K79, G107, and S109 each contribute to the sn-glycerol 3-phosphate site. Residue A111 participates in NADPH binding. The sn-glycerol 3-phosphate site is built by K161, D214, S224, R225, and N226. The active-site Proton acceptor is K161. R225 is a binding site for NADPH. NADPH-binding residues include V249 and E251.

This sequence belongs to the NAD-dependent glycerol-3-phosphate dehydrogenase family.

The protein localises to the cytoplasm. The catalysed reaction is sn-glycerol 3-phosphate + NAD(+) = dihydroxyacetone phosphate + NADH + H(+). It carries out the reaction sn-glycerol 3-phosphate + NADP(+) = dihydroxyacetone phosphate + NADPH + H(+). It functions in the pathway membrane lipid metabolism; glycerophospholipid metabolism. Catalyzes the reduction of the glycolytic intermediate dihydroxyacetone phosphate (DHAP) to sn-glycerol 3-phosphate (G3P), the key precursor for phospholipid synthesis. This is Glycerol-3-phosphate dehydrogenase [NAD(P)+] from Campylobacter jejuni subsp. jejuni serotype O:2 (strain ATCC 700819 / NCTC 11168).